The following is a 417-amino-acid chain: Probable dihydrofolate synthetase (417 aa).

Residue 34 to 37 (GKGS) coordinates ATP. Mg(2+) is bound by residues Ser58, Glu123, and His151. Residues Arg274 and Asp289 each coordinate ATP.

The protein belongs to the folylpolyglutamate synthase family.

The catalysed reaction is 7,8-dihydropteroate + L-glutamate + ATP = 7,8-dihydrofolate + ADP + phosphate + H(+). Its pathway is cofactor biosynthesis; tetrahydrofolylpolyglutamate biosynthesis. Its function is as follows. Glutamate-adding enzyme which catalyzes the binding of the first glutamyl side chain to dihydropteroate. Leads to the de nove synthesis of tetrahydrofolate. de novo. This chain is Probable dihydrofolate synthetase (fol3), found in Schizosaccharomyces pombe (strain 972 / ATCC 24843) (Fission yeast).